Consider the following 443-residue polypeptide: tRNA modification GTPase MnmE (443 aa).

(6S)-5-formyl-5,6,7,8-tetrahydrofolate is bound by residues R23, E80, and K120. The TrmE-type G domain maps to 217-367 (GFEVVILGAP…LLAEIGRRAA (151 aa)). Residues 227–232 (NAGKSS), 246–252 (TDEPGTT), and 271–274 (DTAG) contribute to the GTP site. 2 residues coordinate Mg(2+): S231 and T252. K443 contacts (6S)-5-formyl-5,6,7,8-tetrahydrofolate.

The protein belongs to the TRAFAC class TrmE-Era-EngA-EngB-Septin-like GTPase superfamily. TrmE GTPase family. Homodimer. Heterotetramer of two MnmE and two MnmG subunits. K(+) serves as cofactor.

Its subcellular location is the cytoplasm. Its function is as follows. Exhibits a very high intrinsic GTPase hydrolysis rate. Involved in the addition of a carboxymethylaminomethyl (cmnm) group at the wobble position (U34) of certain tRNAs, forming tRNA-cmnm(5)s(2)U34. The chain is tRNA modification GTPase MnmE from Mesorhizobium japonicum (strain LMG 29417 / CECT 9101 / MAFF 303099) (Mesorhizobium loti (strain MAFF 303099)).